The sequence spans 100 residues: NADH-quinone oxidoreductase subunit K (100 aa).

3 helical membrane passes run 4 to 24, 28 to 48, and 60 to 80; these read LQHGLILAAILFVLGLTGLVI, LLFMLIGLEIMINASALAFVV, and VMYILAISLAAAEASIGLALL.

This sequence belongs to the complex I subunit 4L family. In terms of assembly, NDH-1 is composed of 13 different subunits. Subunits NuoA, H, J, K, L, M, N constitute the membrane sector of the complex.

Its subcellular location is the cell inner membrane. It carries out the reaction a quinone + NADH + 5 H(+)(in) = a quinol + NAD(+) + 4 H(+)(out). Its function is as follows. NDH-1 shuttles electrons from NADH, via FMN and iron-sulfur (Fe-S) centers, to quinones in the respiratory chain. The immediate electron acceptor for the enzyme in this species is believed to be ubiquinone. Couples the redox reaction to proton translocation (for every two electrons transferred, four hydrogen ions are translocated across the cytoplasmic membrane), and thus conserves the redox energy in a proton gradient. The chain is NADH-quinone oxidoreductase subunit K from Citrobacter koseri (strain ATCC BAA-895 / CDC 4225-83 / SGSC4696).